A 398-amino-acid polypeptide reads, in one-letter code: MASGINQAAGKLPAIAKKVQNLGDMGVWQKSRAFHDLIGYINGTSSAIQGIKTTDEIFESEMLKKLLRLFDALEKLVEQNPPLEQPQRFGNKAYRDWAQAMRELLPELLEQLLPDDKKRYQVELGQYLTESFGNATRIDYGTGHELSFLFFLCSLFKAEILQERDIVSAALRLFNRYLELARQLQRTYNMEPAGSQGVWSLDDFQFVPFIWGSAQLAVKSPFDPSKFVDEAIITEYKDHFMFISCIDYICKVKTGHFGEHSNQLWSITDVPTWAKINAGLVKMYQKEILSKFPVIQHVYFGELMTFEPVSSGTTLSNARLGHVAPPPSKRICIGTPNLVPPVPVATAPPPPAESLSIEQNVGDSSSESSDNSVVLRPSTSSSSLVAAAEGSGDKPSKE.

Arg-137, Thr-142, and Gly-143 together coordinate ATP. The Mg(2+) site is built by Gly-197 and Asp-203. The ATP site is built by Pro-293, Gln-296, and His-297. Pro residues predominate over residues 343–352 (PVATAPPPPA). Residues 343-398 (PVATAPPPPAESLSIEQNVGDSSSESSDNSVVLRPSTSSSSLVAAAEGSGDKPSKE) are disordered. Residues 363–388 (DSSSESSDNSVVLRPSTSSSSLVAAA) are compositionally biased toward low complexity.

Belongs to the PTPA-type PPIase family. As to quaternary structure, associates with PP2A heterodimeric core enzyme PP2A(D), composed of a catalytic subunit (subunit C) and a constant regulatory subunit (PR65 or subunit A). Interacts with the catalytic subunit Pp4-19C of the serine/threonine-protein phosphatase 4 (PP4) complex; thereby mediating basal localization of the Miranda (Mira) complex; probably by facilitating the dephosphorylation of Mira.

It is found in the cytoplasm. It localises to the nucleus. The enzyme catalyses [protein]-peptidylproline (omega=180) = [protein]-peptidylproline (omega=0). Its function is as follows. PPIases accelerate the folding of proteins. It catalyzes the cis-trans isomerization of proline imidic peptide bonds in oligopeptides. Acts as a regulatory subunit for serine/threonine-protein phosphatase 2A (PP2A). Modulates PP2A activity or substrate specificity, probably by inducing a conformational change in the catalytic subunit, a proposed direct target of the PPIase. Acts as mediator for the basal localization of the Miranda (Mira) complex during mitosis of larval neuroblast asymmetric division. Associates with the phosphatase 4 (PP4) complex to mediate basal localization of Mira; probably by facilitating the dephosphorylation of Mira. Cortical association of Mira mediated by the PTPA-PP4 complex seems to be independent of aPKC activity. The polypeptide is Serine/threonine-protein phosphatase 2A activator (Drosophila melanogaster (Fruit fly)).